The primary structure comprises 275 residues: Octanoyl-[GcvH]:protein N-octanoyltransferase (275 aa).

Positions glycine 42–glutamate 246 constitute a BPL/LPL catalytic domain. Catalysis depends on cysteine 145, which acts as the Acyl-thioester intermediate.

This sequence belongs to the octanoyltransferase LipL family.

It catalyses the reaction N(6)-octanoyl-L-lysyl-[glycine-cleavage complex H protein] + L-lysyl-[lipoyl-carrier protein] = N(6)-octanoyl-L-lysyl-[lipoyl-carrier protein] + L-lysyl-[glycine-cleavage complex H protein]. The protein operates within protein modification; protein lipoylation via endogenous pathway; protein N(6)-(lipoyl)lysine from octanoyl-[acyl-carrier-protein]. Functionally, catalyzes the amidotransfer (transamidation) of the octanoyl moiety from octanoyl-GcvH to the lipoyl domain of the E2 subunit of lipoate-dependent enzymes. The chain is Octanoyl-[GcvH]:protein N-octanoyltransferase from Anoxybacillus flavithermus (strain DSM 21510 / WK1).